A 112-amino-acid polypeptide reads, in one-letter code: C-X-C motif chemokine 6 (112 aa).

Residues 1–36 form the signal peptide; the sequence is MRLLSSRAARVSGPSGSLCALLALLLLTPPGPLASA. 2 cysteine pairs are disulfide-bonded: Cys-48-Cys-74 and Cys-50-Cys-90.

Belongs to the intercrine alpha (chemokine CxC) family.

It localises to the secreted. Chemotactic for neutrophil granulocytes. Signals through binding and activation of its receptors (CXCR1 and CXCR2). In addition to its chemotactic and angiogenic properties, it has strong antibacterial activity against Gram-positive and Gram-negative bacteria (90-fold-higher when compared to CXCL5 and CXCL7). In Bos taurus (Bovine), this protein is C-X-C motif chemokine 6 (CXCL6).